We begin with the raw amino-acid sequence, 315 residues long: KH domain-containing protein At5g56140 (315 aa).

2 disordered regions span residues 1–53 and 136–158; these read MMMM…GGLR and SQFP…SPGS. The segment covering 7-28 has biased composition (gly residues); that stretch reads LGGGGGGGGGSGGGIGGGGGGR. Composition is skewed to polar residues over residues 31–53 and 136–146; these read TYSS…GGLR and SQFPSERSVPS. Residues 171–238 form the KH domain; sequence DIPVDNYPNF…EHLNEPLHIL (68 aa). The segment at 289 to 315 is disordered; it reads REEGSPMSGSVSPYNSLGMKRAKTREG. Serine 300 carries the post-translational modification Phosphoserine.

The protein resides in the nucleus. This chain is KH domain-containing protein At5g56140, found in Arabidopsis thaliana (Mouse-ear cress).